The following is a 379-amino-acid chain: Cyclic dinucleotide synthase CdnE (379 aa).

Gln107, Ser109, Asp123, and Lys179 together coordinate UTP. Asp123 serves as a coordination point for Mg(2+). Asp193 is a Mg(2+) binding site. 3 residues coordinate UTP: Asn229, Lys257, and Ser274. Residues 328-330 (KIF) carry the Pyrimidine specificity motif (R/Q)xW in donor pocket motif.

This sequence belongs to the CD-NTase family. E02 subfamily. It depends on Mg(2+) as a cofactor.

The catalysed reaction is 2 UTP = c-di-UMP + 2 diphosphate. It carries out the reaction UTP + ATP = 3',3'-cUAMP + 2 diphosphate. The enzyme catalyses UTP + CTP = cyclic CMP-UMP + 2 diphosphate. Cyclic nucleotide synthase (second messenger synthase) of a CBASS antivirus system. CBASS (cyclic oligonucleotide-based antiphage signaling system) provides immunity against bacteriophage. The CD-NTase protein synthesizes cyclic nucleotides in response to infection; these serve as specific second messenger signals. The signals activate a diverse range of effectors, leading to bacterial cell death and thus abortive phage infection. The effector protein for this system is membrane protein Cap15. A type I-B(UU) CBASS system. In terms of biological role, cyclic dinucleotide synthase that preferentially catalyzes the synthesis of 3',3'-cyclic UMP-UMP (c-di-UMP) and 3',3'-cyclic UMP-AMP, with minor amounts of 3',3'-cyclic UMP-CMP, which are second messengers for cell signal transduction. Its function is as follows. Protects E.coli against phage infection. When the CBASS operon (cap15-cdnE) is introduced in E.coli MG1655 it protects against phages T2, T4, T5, T6, SECPhi4, SECPhi6, SECPhi17, SECPhi18 and SECPhi27, but not against phage T7. This is Cyclic dinucleotide synthase CdnE from Yersinia aleksiciae.